Consider the following 255-residue polypeptide: H-2 class II histocompatibility antigen, E-K alpha chain (255 aa).

The N-terminal stretch at 1–25 (MATIGALVLRFFFIAVLMSSQKSWA) is a signal peptide. Residues 26 to 109 (IKEEHTIIQA…ERSNNTPDAN (84 aa)) are alpha-1. The Extracellular segment spans residues 26–216 (IKEEHTIIQA…EKTLLPETKE (191 aa)). The tract at residues 110 to 203 (VAPEVTVLSR…GLEEPLRKHW (94 aa)) is alpha-2. The Ig-like C1-type domain occupies 112–204 (PEVTVLSRSP…LEEPLRKHWE (93 aa)). Cysteine 132 and cysteine 188 form a disulfide bridge. Asparagine 143 carries an N-linked (GlcNAc...) asparagine glycan. Residues 204-216 (EFEEKTLLPETKE) form a connecting peptide region. A helical transmembrane segment spans residues 217–242 (NVVCALGLFVGLVGIVVGIILIMKGI). The Cytoplasmic portion of the chain corresponds to 243-255 (KKRNVVERRQGAL).

This sequence belongs to the MHC class II family.

The protein resides in the membrane. The protein is H-2 class II histocompatibility antigen, E-K alpha chain of Mus musculus (Mouse).